An 861-amino-acid polypeptide reads, in one-letter code: Protein argonaute-4 (861 aa).

The PAZ domain maps to 219–338 (PIIEFMCEVL…LPLEVCNIVA (120 aa)). The 312-residue stretch at 509 to 820 (LIVVILPGKT…VAFRARYHLV (312 aa)) folds into the Piwi domain. The interval 825–846 (DSAEGSHVSGQSNGRDPQALAK) is disordered.

This sequence belongs to the argonaute family. Ago subfamily. As to quaternary structure, interacts with EIF4B, IMP8, PRMT5, TNRC6A and TNRC6B. Interacts with ZFP36. Post-translationally, ubiquitinated on surface-exposed lysines by a SCF-like E3 ubiquitin-protein ligase complex containing ZSWIM8 during target-directed microRNA degradation (TDMD), a process that mediates degradation of microRNAs (miRNAs). Ubiquitination by the SCF-like E3 ubiquitin-protein ligase complex containing ZSWIM8 leads to its subsequent degradation, thereby exposing miRNAs for degradation. ZSWIM8 recognizes and binds AGO4 when it is engaged with a TDMD target.

Its subcellular location is the cytoplasm. The protein resides in the P-body. In terms of biological role, required for RNA-mediated gene silencing (RNAi). Binds to short RNAs such as microRNAs (miRNAs) and represses the translation of mRNAs which are complementary to them. Lacks endonuclease activity and does not appear to cleave target mRNAs. Also required for RNA-directed transcription and replication of the human hapatitis delta virus (HDV). In Homo sapiens (Human), this protein is Protein argonaute-4 (AGO4).